The following is a 270-amino-acid chain: UPF0354 protein BCAH187_A4826 (270 aa).

This sequence belongs to the UPF0354 family.

This Bacillus cereus (strain AH187) protein is UPF0354 protein BCAH187_A4826.